The chain runs to 563 residues: Probable lysosomal cobalamin transporter (563 aa).

5 consecutive transmembrane segments (helical) span residues 8–28 (LIWF…SVFI), 40–60 (FVTF…MLLP), 95–115 (VIYY…IPFA), 144–164 (YTLA…FAPM), and 188–208 (AFTF…VFYT). N228 carries an N-linked (GlcNAc...) asparagine glycan. The next 4 helical transmembrane spans lie at 314 to 334 (GGFS…MTVI), 374 to 394 (IIFA…VVAV), 416 to 436 (MLLA…SVVM), and 506 to 526 (FGAL…VILV). The interval 537–563 (ERQLDEDAEEAEEESLLASTGRSGNPT) is disordered. Over residues 539 to 551 (QLDEDAEEAEEES) the composition is skewed to acidic residues.

The protein belongs to the LIMR family. LMBRD1 subfamily.

Its subcellular location is the lysosome membrane. In terms of biological role, probable lysosomal cobalamin transporter. Required to export cobalamin from lysosomes allowing its conversion to cofactors. This Neosartorya fischeri (strain ATCC 1020 / DSM 3700 / CBS 544.65 / FGSC A1164 / JCM 1740 / NRRL 181 / WB 181) (Aspergillus fischerianus) protein is Probable lysosomal cobalamin transporter.